The sequence spans 253 residues: Triosephosphate isomerase, cytosolic (253 aa).

Residues N10 and K12 each coordinate substrate. Residue H96 is the Electrophile of the active site. The active-site Proton acceptor is E166.

The protein belongs to the triosephosphate isomerase family. Homodimer. Starchy endosperm.

The protein localises to the cytoplasm. The enzyme catalyses D-glyceraldehyde 3-phosphate = dihydroxyacetone phosphate. It participates in carbohydrate biosynthesis; gluconeogenesis. The protein operates within carbohydrate degradation; glycolysis; D-glyceraldehyde 3-phosphate from glycerone phosphate: step 1/1. In Hordeum vulgare (Barley), this protein is Triosephosphate isomerase, cytosolic.